The primary structure comprises 517 residues: Quinol oxidase subunit 1 (517 aa).

12 helical membrane-spanning segments follow: residues 19–39 (VVWL…IAAM), 64–84 (IHGW…VIGF), 98–118 (QMAI…AGSP), 150–170 (MAYL…VTLI), 185–205 (IFAA…PALA), 226–246 (WAIL…FPLF), 271–291 (IYLL…TWPL), 303–323 (TLIL…TIFT), 333–353 (VGMG…QALV), 369–389 (VVGH…TTVF), 412–432 (IGMI…SVAG), and 460–480 (IGIP…LAYA). His-65 is a binding site for Fe(II)-heme a. The Cu cation site is built by His-235, Tyr-239, His-284, and His-285. A cross-link (1'-histidyl-3'-tyrosine (His-Tyr)) is located at residues 235–239 (HPVVY). Residue His-372 participates in heme a3 binding. His-374 contacts Fe(II)-heme a.

This sequence belongs to the heme-copper respiratory oxidase family.

The protein localises to the cell membrane. It carries out the reaction 2 a quinol + O2 = 2 a quinone + 2 H2O. Functionally, catalyzes the reduction of oxygen to water. Subunits I, II and III form the functional core of the enzyme complex. Electrons originating in caldariella quinol are transferred to the binuclear center formed by heme A3 and Cu(B). In terms of biological role, subunit I binds heme a and the bimetallic center. The protein is Quinol oxidase subunit 1 (soxB) of Sulfolobus acidocaldarius (strain ATCC 33909 / DSM 639 / JCM 8929 / NBRC 15157 / NCIMB 11770).